Consider the following 84-residue polypeptide: Cell division topological specificity factor (84 aa).

This sequence belongs to the MinE family.

Functionally, prevents the cell division inhibition by proteins MinC and MinD at internal division sites while permitting inhibition at polar sites. This ensures cell division at the proper site by restricting the formation of a division septum at the midpoint of the long axis of the cell. The polypeptide is Cell division topological specificity factor (Pseudomonas entomophila (strain L48)).